The primary structure comprises 1032 residues: Integrin alpha-4 (1032 aa).

The N-terminal stretch at 1–34 is a signal peptide; it reads MIRDLGKVGKVSLLLDHIWTGILLYTVILTPADC. The Extracellular segment spans residues 35–974; sequence YNIDESSPML…LHNLKPKKHV (940 aa). 7 FG-GAP repeats span residues 36–100, 113–177, 186–237, 238–291, 292–351, 353–411, and 415–477; these read NIDE…PNRT, KCGK…TELS, DHVR…TIKS, YVDL…EKQL, TILF…GAME, LKFE…GITP, and QRLQ…LPST. Asn-81 and Asn-98 each carry an N-linked (GlcNAc...) asparagine glycan. 3 cysteine pairs are disulfide-bonded: Cys-91–Cys-101, Cys-144–Cys-165, and Cys-183–Cys-198. A glycan (N-linked (GlcNAc...) asparagine) is linked at Asn-229. Ca(2+)-binding residues include Asp-314, Asn-316, Asp-318, Leu-320, Asp-322, Asp-376, Asp-378, Asp-380, Asp-384, Asp-438, Asp-440, Asn-442, Tyr-444, and Asp-446. N-linked (GlcNAc...) asparagine glycosylation occurs at Asn-479. Cysteines 485 and 494 form a disulfide. N-linked (GlcNAc...) asparagine glycosylation is found at Asn-496, Asn-517, Asn-537, Asn-626, and Asn-660. Disulfide bonds link Cys-500/Cys-556 and Cys-622/Cys-627. The cysteines at positions 698 and 712 are disulfide-linked. Asn-746 and Asn-857 each carry an N-linked (GlcNAc...) asparagine glycan. 2 cysteine pairs are disulfide-bonded: Cys-853/Cys-889 and Cys-896/Cys-901. A helical transmembrane segment spans residues 975 to 998; sequence IYMIIGISLLLGILLFSLLTYILW. Residues 999–1032 are Cytoplasmic-facing; that stretch reads KVGFFRRKYQPIGTEETSRRESWNYLNKDEKEVK. The GFFKR motif motif lies at 1001–1005; the sequence is GFFRR.

Belongs to the integrin alpha chain family. In terms of assembly, heterodimer of an alpha and a beta subunit.

The protein resides in the membrane. In terms of biological role, fibronectin and V-CAM adhesion receptor. The chain is Integrin alpha-4 (itga4) from Xenopus laevis (African clawed frog).